Consider the following 333-residue polypeptide: UDP-3-O-acylglucosamine N-acyltransferase (333 aa).

His225 (proton acceptor) is an active-site residue.

This sequence belongs to the transferase hexapeptide repeat family. LpxD subfamily. Homotrimer.

The enzyme catalyses a UDP-3-O-[(3R)-3-hydroxyacyl]-alpha-D-glucosamine + a (3R)-hydroxyacyl-[ACP] = a UDP-2-N,3-O-bis[(3R)-3-hydroxyacyl]-alpha-D-glucosamine + holo-[ACP] + H(+). It participates in bacterial outer membrane biogenesis; LPS lipid A biosynthesis. In terms of biological role, catalyzes the N-acylation of UDP-3-O-acylglucosamine using 3-hydroxyacyl-ACP as the acyl donor. Is involved in the biosynthesis of lipid A, a phosphorylated glycolipid that anchors the lipopolysaccharide to the outer membrane of the cell. This Paracidovorax citrulli (strain AAC00-1) (Acidovorax citrulli) protein is UDP-3-O-acylglucosamine N-acyltransferase.